A 281-amino-acid chain; its full sequence is Bifunctional protein FolD (281 aa).

NADP(+) contacts are provided by residues 164–166 and serine 189; that span reads GRS.

It belongs to the tetrahydrofolate dehydrogenase/cyclohydrolase family. Homodimer.

It catalyses the reaction (6R)-5,10-methylene-5,6,7,8-tetrahydrofolate + NADP(+) = (6R)-5,10-methenyltetrahydrofolate + NADPH. The catalysed reaction is (6R)-5,10-methenyltetrahydrofolate + H2O = (6R)-10-formyltetrahydrofolate + H(+). It participates in one-carbon metabolism; tetrahydrofolate interconversion. Catalyzes the oxidation of 5,10-methylenetetrahydrofolate to 5,10-methenyltetrahydrofolate and then the hydrolysis of 5,10-methenyltetrahydrofolate to 10-formyltetrahydrofolate. This Enterococcus faecalis (strain ATCC 700802 / V583) protein is Bifunctional protein FolD.